A 114-amino-acid chain; its full sequence is Immunoglobulin kappa variable 6D-21 (114 aa).

A signal peptide spans M1–G19. The segment at E20–C42 is framework-1. In terms of domain architecture, Ig-like spans E20 to P114. Residues C42 and C107 are joined by a disulfide bond. The complementarity-determining-1 stretch occupies residues R43–H53. The framework-2 stretch occupies residues W54–K68. Residues Y69–S75 are complementarity-determining-2. Residues G76–C107 are framework-3. The interval H108–P114 is complementarity-determining-3.

In terms of assembly, immunoglobulins are composed of two identical heavy chains and two identical light chains; disulfide-linked.

The protein localises to the secreted. It is found in the cell membrane. In terms of biological role, v region of the variable domain of immunoglobulin light chains that participates in the antigen recognition. Immunoglobulins, also known as antibodies, are membrane-bound or secreted glycoproteins produced by B lymphocytes. In the recognition phase of humoral immunity, the membrane-bound immunoglobulins serve as receptors which, upon binding of a specific antigen, trigger the clonal expansion and differentiation of B lymphocytes into immunoglobulins-secreting plasma cells. Secreted immunoglobulins mediate the effector phase of humoral immunity, which results in the elimination of bound antigens. The antigen binding site is formed by the variable domain of one heavy chain, together with that of its associated light chain. Thus, each immunoglobulin has two antigen binding sites with remarkable affinity for a particular antigen. The variable domains are assembled by a process called V-(D)-J rearrangement and can then be subjected to somatic hypermutations which, after exposure to antigen and selection, allow affinity maturation for a particular antigen. The chain is Immunoglobulin kappa variable 6D-21 from Homo sapiens (Human).